We begin with the raw amino-acid sequence, 310 residues long: N-acetyl-gamma-glutamyl-phosphate reductase (310 aa).

Cys-117 is a catalytic residue.

The protein belongs to the NAGSA dehydrogenase family. Type 2 subfamily.

The protein localises to the cytoplasm. It carries out the reaction N-acetyl-L-glutamate 5-semialdehyde + phosphate + NADP(+) = N-acetyl-L-glutamyl 5-phosphate + NADPH + H(+). The protein operates within amino-acid biosynthesis; L-arginine biosynthesis; N(2)-acetyl-L-ornithine from L-glutamate: step 3/4. Its function is as follows. Catalyzes the NADPH-dependent reduction of N-acetyl-5-glutamyl phosphate to yield N-acetyl-L-glutamate 5-semialdehyde. The chain is N-acetyl-gamma-glutamyl-phosphate reductase from Rhizobium etli (strain CIAT 652).